We begin with the raw amino-acid sequence, 57 residues long: uncharacterized protein (57 aa).

A signal peptide spans 1–22 (MNEIIITIIVLILLLFITLSRN). A coiled-coil region spans residues 26-57 (NNQSNNGKKEKLIKCKKEVQQLRQKLDQLTFQ).

This is an uncharacterized protein from Acheta domesticus (House cricket).